We begin with the raw amino-acid sequence, 603 residues long: Bud site selection protein 8 (603 aa).

The span at 1–10 (MIQSDEDNLD) shows a compositional bias: acidic residues. Disordered stretches follow at residues 1–25 (MIQS…GTSS), 83–150 (ASTS…SPSS), and 190–212 (ANRG…EPNE). Residues 1 to 515 (MIQSDEDNLD…GFRDVYSIEN (515 aa)) are Extracellular-facing. Composition is skewed to low complexity over residues 11-25 (SSET…GTSS) and 84-95 (STSSSSSSNSSS). N-linked (GlcNAc...) asparagine glycosylation is found at N92, N110, N211, N240, N271, and N333. Residues 96–115 (ITQFHDTQDNNIPSNTTVRP) are compositionally biased toward polar residues. The tract at residues 286–479 (AGSIKSSTSD…NRKEDRHDAE (194 aa)) is disordered. Positions 325-335 (PSHNSDSSNES) are enriched in low complexity. The span at 336–350 (SPKDHIGHNNEEKFS) shows a compositional bias: basic and acidic residues. N-linked (GlcNAc...) asparagine glycans are attached at residues N396 and N423. Positions 439-452 (KSQSSESDTGQNSI) are enriched in polar residues. Basic and acidic residues predominate over residues 463-479 (KQQEKTDNRKEDRHDAE). Residues 516-536 (IIVILLCCSIVPPLFFIIGCS) traverse the membrane as a helical segment. Topologically, residues 537–577 (SRRKLVSDYRLMRLLMNKEHRAALLQGFIWDVDLRWFRMFC) are cytoplasmic. A helical transmembrane segment spans residues 578–598 (LILGAAETVIVMAGIAIGFGV). Residues 599 to 603 (GITRE) are Extracellular-facing.

It belongs to the BUD8/9 family. In terms of assembly, interacts with RAX1 RAX2 at the proximal or distal pole in unbudded cells. In terms of processing, N- and O-glycosylated.

It is found in the cell membrane. It localises to the bud tip. In terms of biological role, involved in positioning the distal bud pole signal. The protein is Bud site selection protein 8 of Saccharomyces cerevisiae (strain ATCC 204508 / S288c) (Baker's yeast).